Here is an 82-residue protein sequence, read N- to C-terminus: Exodeoxyribonuclease 7 small subunit (82 aa).

Belongs to the XseB family. In terms of assembly, heterooligomer composed of large and small subunits.

The protein localises to the cytoplasm. It carries out the reaction Exonucleolytic cleavage in either 5'- to 3'- or 3'- to 5'-direction to yield nucleoside 5'-phosphates.. Functionally, bidirectionally degrades single-stranded DNA into large acid-insoluble oligonucleotides, which are then degraded further into small acid-soluble oligonucleotides. In Pectobacterium carotovorum subsp. carotovorum (strain PC1), this protein is Exodeoxyribonuclease 7 small subunit.